Here is a 90-residue protein sequence, read N- to C-terminus: Probable Fe(2+)-trafficking protein (90 aa).

This sequence belongs to the Fe(2+)-trafficking protein family.

In terms of biological role, could be a mediator in iron transactions between iron acquisition and iron-requiring processes, such as synthesis and/or repair of Fe-S clusters in biosynthetic enzymes. This chain is Probable Fe(2+)-trafficking protein, found in Paraburkholderia xenovorans (strain LB400).